Consider the following 515-residue polypeptide: Maturase K (515 aa).

This sequence belongs to the intron maturase 2 family. MatK subfamily.

It localises to the plastid. The protein resides in the chloroplast. Its function is as follows. Usually encoded in the trnK tRNA gene intron. Probably assists in splicing its own and other chloroplast group II introns. In Trillium pusillum (Dwarf wakerobin), this protein is Maturase K.